A 139-amino-acid chain; its full sequence is MRHKVGQRKLHRSTSHRLAMLNNMVTSLLEHQAIRTTLPKAKEARKIAERIITLGKRGGLANVRLAARTVKDRDVLQKVFGEYKDRYASRPGGYTRIVRLGFRRGDAAEMALLELVDRPEKAAPVDTEAAAPAEETKAE.

It belongs to the bacterial ribosomal protein bL17 family. Part of the 50S ribosomal subunit. Contacts protein L32.

The chain is Large ribosomal subunit protein bL17 from Myxococcus xanthus (strain DK1622).